The following is a 128-amino-acid chain: Gas vesicle protein O (128 aa).

Residues 1–49 form a disordered region; the sequence is MANTPEDTQNTQNDSQNDSQNDSQKDTSARATSARAHQQPQEQPPSPMR. Over residues 7-22 the composition is skewed to low complexity; sequence DTQNTQNDSQNDSQND. Residues 29–41 are compositionally biased toward polar residues; that stretch reads ARATSARAHQQPQ.

Belongs to the gas vesicle GvpO family.

The protein localises to the gas vesicle. A minor component of the gas vesicle. May play a role in transcription and/or RNA stability and in GV assembly. Gas vesicles are hollow, gas filled proteinaceous nanostructures found in some microorganisms. It is not clear what function gas vesicles perform in soil bacteria. This is Gas vesicle protein O from Streptomyces sp. (strain CB03234).